The chain runs to 109 residues: Period circadian protein (109 aa).

Composition is skewed to polar residues over residues 42-56 and 68-80; these read QSYSTPANTGSNLSP and SSRNCTSGSNLNM. The segment at 42–109 is disordered; sequence QSYSTPANTG…LVTLTESLLK (68 aa). Over residues 81–97 the composition is skewed to low complexity; it reads GSVTNTSNTGTGTSSGS.

Forms a heterodimer with timeless (TIM); the complex then translocates into the nucleus. Phosphorylated with a circadian rhythmicity, probably by the double-time protein (dbt). Phosphorylation could be implicated in the stability of per monomer and in the formation of heterodimer per-tim.

It is found in the nucleus. The protein resides in the cytoplasm. It localises to the perinuclear region. Functionally, essential for biological clock functions. Determines the period length of circadian and ultradian rhythms; an increase in PER dosage leads to shortened circadian rhythms and a decrease leads to lengthened circadian rhythms. Essential for the circadian rhythmicity of locomotor activity, eclosion behavior, and for the rhythmic component of the male courtship song that originates in the thoracic nervous system. The biological cycle depends on the rhythmic formation and nuclear localization of the TIM-PER complex. Light induces the degradation of TIM, which promotes elimination of PER. Nuclear activity of the heterodimer coordinatively regulates PER and TIM transcription through a negative feedback loop. Behaves as a negative element in circadian transcriptional loop. Does not appear to bind DNA, suggesting indirect transcriptional inhibition. The sequence is that of Period circadian protein (per) from Musca domestica (House fly).